The primary structure comprises 322 residues: Follistatin-A (322 aa).

The first 32 residues, 1 to 32 (MLRMLKRQQLHPGMILLLFWLCYLIEDQKVQA), serve as a signal peptide directing secretion. One can recognise a TB domain in the interval 33–106 (GNCWLQQGKN…TCDNVDCGPG (74 aa)). Disulfide bonds link Cys-35–Cys-58, Cys-45–Cys-91, Cys-59–Cys-94, Cys-98–Cys-109, Cys-103–Cys-119, Cys-121–Cys-153, Cys-125–Cys-146, and Cys-135–Cys-167. An N-linked (GlcNAc...) asparagine glycan is attached at Asn-75. Positions 97–120 (TCDNVDCGPGKRCKMNRRSKPRCV) constitute a Follistatin-like 1 domain. Kazal-like domains follow at residues 103–169 (CGPG…KCKK), 189–244 (NAYC…KCIK), and 267–321 (RGRC…SCNC). Asn-127 carries N-linked (GlcNAc...) asparagine glycosylation. The 24-residue stretch at 170 to 193 (TCRDVLCPGSSTCVVDQTNNAYCV) folds into the Follistatin-like 2 domain. 3 disulfides stabilise this stretch: Cys-195/Cys-228, Cys-199/Cys-221, and Cys-210/Cys-242. A Follistatin-like 3 domain is found at 247-271 (SCDDIHCSAGKKCLWDAKMSRGRCA). 3 cysteine pairs are disulfide-bonded: Cys-273-Cys-305, Cys-277-Cys-298, and Cys-287-Cys-319. An N-linked (GlcNAc...) asparagine glycan is attached at Asn-291.

As to quaternary structure, monomer. In terms of tissue distribution, not expressed in the organizer region. Expression in gastrulating embryos is confined to anterior and paraxial regions, which give rise to head mesoderm and the first five somites. In addition, expressed transiently in a subset of cells in the posterior notochord anlage. Later, expression is seen in brain, eyes and somites.

Functionally, binds directly to activin and functions as an activin antagonist. Specific inhibitor of the biosynthesis and secretion of pituitary follicle stimulating hormone (fsh). Inhibits bmp-signaling during later stages of development including late phases of dorsoventral patterning, to refine the early pattern set up by the interaction of chordino and bmp2/4. Not involved in organizer function or early phases of dorsoventral pattern formation. The polypeptide is Follistatin-A (fsta) (Danio rerio (Zebrafish)).